The following is a 215-amino-acid chain: Pyridoxine/pyridoxamine 5'-phosphate oxidase (215 aa).

Residues 9–12 and Lys-69 contribute to the substrate site; that span reads RREY. FMN contacts are provided by residues 64–69, 79–80, Lys-86, and Gln-108; these read RILLLK and FT. The substrate site is built by Tyr-126, Arg-130, and Ser-134. FMN is bound by residues 143–144 and Trp-188; that span reads QS. 194–196 is a binding site for substrate; it reads RLH. Position 198 (Arg-198) interacts with FMN.

Belongs to the pyridoxamine 5'-phosphate oxidase family. Homodimer. It depends on FMN as a cofactor.

The enzyme catalyses pyridoxamine 5'-phosphate + O2 + H2O = pyridoxal 5'-phosphate + H2O2 + NH4(+). It carries out the reaction pyridoxine 5'-phosphate + O2 = pyridoxal 5'-phosphate + H2O2. Its pathway is cofactor metabolism; pyridoxal 5'-phosphate salvage; pyridoxal 5'-phosphate from pyridoxamine 5'-phosphate: step 1/1. The protein operates within cofactor metabolism; pyridoxal 5'-phosphate salvage; pyridoxal 5'-phosphate from pyridoxine 5'-phosphate: step 1/1. Its function is as follows. Catalyzes the oxidation of either pyridoxine 5'-phosphate (PNP) or pyridoxamine 5'-phosphate (PMP) into pyridoxal 5'-phosphate (PLP). The polypeptide is Pyridoxine/pyridoxamine 5'-phosphate oxidase (Pseudomonas paraeruginosa (strain DSM 24068 / PA7) (Pseudomonas aeruginosa (strain PA7))).